A 347-amino-acid polypeptide reads, in one-letter code: GMP reductase (347 aa).

108–131 (DDFTKTRQILAMSSALRFICVDVA) contacts NADP(+). The K(+) site is built by Gly181 and Gly183. The Thioimidate intermediate role is filled by Cys186. NADP(+) is bound at residue 216 to 239 (IVGDGGCTCPGDVAKAFGGGADFV).

The protein belongs to the IMPDH/GMPR family. GuaC type 1 subfamily. In terms of assembly, homotetramer.

The enzyme catalyses IMP + NH4(+) + NADP(+) = GMP + NADPH + 2 H(+). Its function is as follows. Catalyzes the irreversible NADPH-dependent deamination of GMP to IMP. It functions in the conversion of nucleobase, nucleoside and nucleotide derivatives of G to A nucleotides, and in maintaining the intracellular balance of A and G nucleotides. The protein is GMP reductase of Aeromonas hydrophila subsp. hydrophila (strain ATCC 7966 / DSM 30187 / BCRC 13018 / CCUG 14551 / JCM 1027 / KCTC 2358 / NCIMB 9240 / NCTC 8049).